A 261-amino-acid chain; its full sequence is Ubiquinone biosynthesis O-methyltransferase (261 aa).

Residues 1-22 (MTMQVDPSANSSAASSAAPGTT) form a disordered region. The span at 8–18 (SANSSAASSAA) shows a compositional bias: low complexity. S-adenosyl-L-methionine contacts are provided by R55, G86, D107, and M149.

This sequence belongs to the methyltransferase superfamily. UbiG/COQ3 family.

The catalysed reaction is a 3-demethylubiquinol + S-adenosyl-L-methionine = a ubiquinol + S-adenosyl-L-homocysteine + H(+). It carries out the reaction a 3-(all-trans-polyprenyl)benzene-1,2-diol + S-adenosyl-L-methionine = a 2-methoxy-6-(all-trans-polyprenyl)phenol + S-adenosyl-L-homocysteine + H(+). It functions in the pathway cofactor biosynthesis; ubiquinone biosynthesis. Functionally, O-methyltransferase that catalyzes the 2 O-methylation steps in the ubiquinone biosynthetic pathway. This is Ubiquinone biosynthesis O-methyltransferase from Nitrobacter winogradskyi (strain ATCC 25391 / DSM 10237 / CIP 104748 / NCIMB 11846 / Nb-255).